Reading from the N-terminus, the 230-residue chain is Ion-translocating oxidoreductase complex subunit E (230 aa).

Residues 1–17 (MSENRTLMLNGMWNNNP) are Cytoplasmic-facing. 2 helical membrane passes run 18 to 38 (ALVQ…VTNA) and 39 to 59 (LGLG…VSLV). The Cytoplasmic portion of the chain corresponds to 60-68 (RDYVPKEVR). The chain crosses the membrane as a helical span at residues 69–89 (IPVFVMIIASLVTCVQLLMNA). Residues 90 to 92 (YAY) are Periplasmic-facing. The chain crosses the membrane as a helical span at residues 93–113 (GLYLSLGIFIPLIVTNCIIIG). Over 114–123 (RAEAFASKND) the chain is Cytoplasmic. Residues 124–144 (VLPAALDGFWMGLGMTSVLVV) form a helical membrane-spanning segment. The Periplasmic portion of the chain corresponds to 145–181 (LGSLREIIGNGTLFDGADLLLGEWAKVLRIEVFHFDS). A helical transmembrane segment spans residues 182-202 (AFLLALLPPGAFIGVGFLIAA). Topologically, residues 203-230 (KSVIDKQIAARQPKQQKQAIERARVTNV) are cytoplasmic.

The protein belongs to the NqrDE/RnfAE family. In terms of assembly, the complex is composed of six subunits: RnfA, RnfB, RnfC, RnfD, RnfE and RnfG.

It localises to the cell inner membrane. Functionally, part of a membrane-bound complex that couples electron transfer with translocation of ions across the membrane. The chain is Ion-translocating oxidoreductase complex subunit E from Vibrio cholerae serotype O1 (strain ATCC 39541 / Classical Ogawa 395 / O395).